We begin with the raw amino-acid sequence, 433 residues long: Oxysterol-binding protein-like protein OBPa (433 aa).

This sequence belongs to the OSBP family.

This is Oxysterol-binding protein-like protein OBPa (OBPA) from Candida albicans (strain SC5314 / ATCC MYA-2876) (Yeast).